Here is a 174-residue protein sequence, read N- to C-terminus: Large ribosomal subunit protein uL10 (174 aa).

It belongs to the universal ribosomal protein uL10 family. In terms of assembly, part of the ribosomal stalk of the 50S ribosomal subunit. The N-terminus interacts with L11 and the large rRNA to form the base of the stalk. The C-terminus forms an elongated spine to which L12 dimers bind in a sequential fashion forming a multimeric L10(L12)X complex.

In terms of biological role, forms part of the ribosomal stalk, playing a central role in the interaction of the ribosome with GTP-bound translation factors. This Rubrobacter xylanophilus (strain DSM 9941 / JCM 11954 / NBRC 16129 / PRD-1) protein is Large ribosomal subunit protein uL10.